We begin with the raw amino-acid sequence, 444 residues long: Adenylosuccinate synthetase (444 aa).

GTP-binding positions include 12-18 (GDEGKGK) and 40-42 (GHT). D13 functions as the Proton acceptor in the catalytic mechanism. The Mg(2+) site is built by D13 and G40. IMP contacts are provided by residues 13–16 (DEGK), 38–41 (NAGH), T128, R142, Q223, T238, and R302. H41 (proton donor) is an active-site residue. 298–304 (TTTGRRR) provides a ligand contact to substrate. GTP is bound by residues R304, 330–332 (KLD), and 412–414 (SLG).

Belongs to the adenylosuccinate synthetase family. As to quaternary structure, homodimer. Mg(2+) serves as cofactor.

The protein localises to the cytoplasm. The enzyme catalyses IMP + L-aspartate + GTP = N(6)-(1,2-dicarboxyethyl)-AMP + GDP + phosphate + 2 H(+). Its pathway is purine metabolism; AMP biosynthesis via de novo pathway; AMP from IMP: step 1/2. Plays an important role in the de novo pathway of purine nucleotide biosynthesis. Catalyzes the first committed step in the biosynthesis of AMP from IMP. The chain is Adenylosuccinate synthetase from Synechococcus sp. (strain ATCC 27144 / PCC 6301 / SAUG 1402/1) (Anacystis nidulans).